The sequence spans 237 residues: Ribonuclease PH (237 aa).

Residues Arg86 and 124–126 contribute to the phosphate site; that span reads GTR.

Belongs to the RNase PH family. As to quaternary structure, homohexameric ring arranged as a trimer of dimers.

The catalysed reaction is tRNA(n+1) + phosphate = tRNA(n) + a ribonucleoside 5'-diphosphate. Phosphorolytic 3'-5' exoribonuclease that plays an important role in tRNA 3'-end maturation. Removes nucleotide residues following the 3'-CCA terminus of tRNAs; can also add nucleotides to the ends of RNA molecules by using nucleoside diphosphates as substrates, but this may not be physiologically important. Probably plays a role in initiation of 16S rRNA degradation (leading to ribosome degradation) during starvation. This is Ribonuclease PH from Bradyrhizobium sp. (strain BTAi1 / ATCC BAA-1182).